Reading from the N-terminus, the 630-residue chain is MDPLKLPKQEFADALGKISSRLGLAEVPEIEKTRRYGYFSARFHKYKIDPTRLRDAVEELSNAGFQYISGLSAEGLYVNADLNAKRLGELVFEAVAKMGKKYGFTEECQLGSFLVEHTSANPIHPLHIGHGRNAILGDSLARLLRFCDNRVEVHFYVDDCGVQVMYATIGYNAVRDEAREWIERAKPDLVVGHIYSATNAVAEIGRLKKEAERAQDDEHKRSLIGEIDEWVAVLKRLMESEGDLVAKVVERLGQRDVAGEAVELNRRYEAGDPEAKRVVREVVDLVLRGQRETLARLGIEIDRWDYESELAVWSGEASRIVEELQRRWPQYVEYKGGAVVFRADKFVDDFKLWDVLDLPKFIPPVTLTRSDGTTLYVTRDVAYALWQARQGFDKVVRVISTEQTHEQAHVRIILYALGFEDVAKKIVHYAYEMVNLPGMKMSARRGRYISLDEILDEAAERSASLVKEKSPEIAGVIAEKVGVGSVRYAFLSTSPRKPIEFRWEVVLNLRQNSGTFLQYTYVRAYSILEKAPDVERASVPEQMLEEEKELLVKIAEWPSVVREAVRALRPDYVAEYLDGLALLFNSYYEKAPVLKAVEGVRKFRIALVNAVKTVLEAGFYILGIPTLTKM.

A 'HIGH' region motif is present at residues 120 to 130 (ANPIHPLHIGH).

This sequence belongs to the class-I aminoacyl-tRNA synthetase family.

It localises to the cytoplasm. It carries out the reaction tRNA(Arg) + L-arginine + ATP = L-arginyl-tRNA(Arg) + AMP + diphosphate. The polypeptide is Arginine--tRNA ligase (Pyrobaculum arsenaticum (strain DSM 13514 / JCM 11321 / PZ6)).